The following is a 363-amino-acid chain: Protein RecA (363 aa).

79 to 86 provides a ligand contact to ATP; sequence GPESSGKT.

It belongs to the RecA family.

It localises to the cytoplasm. Can catalyze the hydrolysis of ATP in the presence of single-stranded DNA, the ATP-dependent uptake of single-stranded DNA by duplex DNA, and the ATP-dependent hybridization of homologous single-stranded DNAs. It interacts with LexA causing its activation and leading to its autocatalytic cleavage. This is Protein RecA from Borrelia duttonii (strain Ly).